The following is a 343-amino-acid chain: D-beta-hydroxybutyrate dehydrogenase, mitochondrial (343 aa).

A mitochondrion-targeting transit peptide spans 1–46 (MLAARLSRPLSQLPGKALSVCDRENGTRHTLLFYPASFSPDTRRTY). Residue 59 to 83 (LVTGCDSGFGFSLAKHLHSKGFLVF) participates in NAD(+) binding. Residue Lys-73 is modified to N6-acetyllysine. At Lys-103 the chain carries N6-acetyllysine; alternate. The residue at position 103 (Lys-103) is an N6-succinyllysine; alternate. N6-acetyllysine is present on residues Lys-132 and Lys-177. Residue Ser-195 participates in substrate binding. The Proton acceptor role is filled by Tyr-208. The residue at position 212 (Lys-212) is an N6-acetyllysine. Ser-219 carries O-linked (GlcNAc) serine glycosylation. Residue Ser-246 is modified to Phosphoserine. N6-acetyllysine is present on Lys-258. Lys-259 is subject to N6-acetyllysine; alternate. The residue at position 259 (Lys-259) is an N6-succinyllysine; alternate. Residue Lys-280 is modified to N6-acetyllysine.

Belongs to the short-chain dehydrogenases/reductases (SDR) family. Homotetramer. As to expression, expressed in liver.

Its subcellular location is the mitochondrion inner membrane. The protein localises to the mitochondrion matrix. The enzyme catalyses (R)-3-hydroxybutanoate + NAD(+) = acetoacetate + NADH + H(+). With respect to regulation, requires phosphatidylcholine as an allosteric activator for enzymatic activity. The chain is D-beta-hydroxybutyrate dehydrogenase, mitochondrial from Rattus norvegicus (Rat).